The following is a 509-amino-acid chain: Cobyric acid synthase (509 aa).

The GATase cobBQ-type domain occupies 262–459 (EIKVGIIKLP…IHGIFENDNW (198 aa)). Cysteine 343 functions as the Nucleophile in the catalytic mechanism. Residue histidine 451 is part of the active site.

It belongs to the CobB/CobQ family. CobQ subfamily.

It functions in the pathway cofactor biosynthesis; adenosylcobalamin biosynthesis. Catalyzes amidations at positions B, D, E, and G on adenosylcobyrinic A,C-diamide. NH(2) groups are provided by glutamine, and one molecule of ATP is hydrogenolyzed for each amidation. This is Cobyric acid synthase from Prochlorococcus marinus (strain AS9601).